The primary structure comprises 224 residues: MTLYTAKDISKNYQSGDEILPVLKGINLSIEHSTMTAIVGASGSGKTTLLQILGTLTKPSSGKLYFKECAVDEKNERELAAFRNASLGFIFQFHHLLPEFTTLENVMMPALIGGKNNAESRANAEDLLRRVELHHRLEHKVTNLSGGEQQRTALARALIMNPAILLADEPTGNLDSRSGEIVFDLLKNLGQERQLATIMVTHNNELAARMDRCVTLLDGSLQEE.

In terms of domain architecture, ABC transporter spans tyrosine 4–glutamate 224. Glycine 40–threonine 47 serves as a coordination point for ATP.

This sequence belongs to the ABC transporter superfamily. Lipoprotein translocase (TC 3.A.1.125) family. The complex is composed of two ATP-binding proteins (LolD) and two transmembrane proteins (LolC and LolE).

Its subcellular location is the cell inner membrane. Part of the ABC transporter complex LolCDE involved in the translocation of mature outer membrane-directed lipoproteins, from the inner membrane to the periplasmic chaperone, LolA. Responsible for the formation of the LolA-lipoprotein complex in an ATP-dependent manner. The protein is Lipoprotein-releasing system ATP-binding protein LolD of Desulfotalea psychrophila (strain LSv54 / DSM 12343).